The chain runs to 454 residues: UDP-N-acetylmuramoylalanine--D-glutamate ligase (454 aa).

ATP is bound at residue 115 to 121 (GTNGKTT).

It belongs to the MurCDEF family.

It is found in the cytoplasm. The enzyme catalyses UDP-N-acetyl-alpha-D-muramoyl-L-alanine + D-glutamate + ATP = UDP-N-acetyl-alpha-D-muramoyl-L-alanyl-D-glutamate + ADP + phosphate + H(+). The protein operates within cell wall biogenesis; peptidoglycan biosynthesis. Functionally, cell wall formation. Catalyzes the addition of glutamate to the nucleotide precursor UDP-N-acetylmuramoyl-L-alanine (UMA). The sequence is that of UDP-N-acetylmuramoylalanine--D-glutamate ligase from Thermoanaerobacter pseudethanolicus (strain ATCC 33223 / 39E) (Clostridium thermohydrosulfuricum).